The following is a 163-amino-acid chain: SsrA-binding protein (163 aa).

This sequence belongs to the SmpB family.

The protein localises to the cytoplasm. Its function is as follows. Required for rescue of stalled ribosomes mediated by trans-translation. Binds to transfer-messenger RNA (tmRNA), required for stable association of tmRNA with ribosomes. tmRNA and SmpB together mimic tRNA shape, replacing the anticodon stem-loop with SmpB. tmRNA is encoded by the ssrA gene; the 2 termini fold to resemble tRNA(Ala) and it encodes a 'tag peptide', a short internal open reading frame. During trans-translation Ala-aminoacylated tmRNA acts like a tRNA, entering the A-site of stalled ribosomes, displacing the stalled mRNA. The ribosome then switches to translate the ORF on the tmRNA; the nascent peptide is terminated with the 'tag peptide' encoded by the tmRNA and targeted for degradation. The ribosome is freed to recommence translation, which seems to be the essential function of trans-translation. In Shewanella putrefaciens (strain CN-32 / ATCC BAA-453), this protein is SsrA-binding protein.